We begin with the raw amino-acid sequence, 550 residues long: MTPADLADLLRTTATAVLTERDLDTAALPATVTVERPRNPEHGDYATNLALQVGKKVGVNPRELAGWLAEALTAAAGIASAEVAGPGFVNLRIEAAAQNVIVGDIITSAERYGHSAALAERNINLEFVSANPTGPIHIGGTRWAAVGDALGRLLATQGAAVVREYYFNDHGAQIDRFVSSLIAAAKGEPTPEDGYAGSYIGDIAAQVLAKDPGALELPDGEMRETFRAIGVDLMFDHIKISLHDFGTDFDVFTHEDSMHTSGRVEEAIARLRENGAIYEKDGATWLRTTDFGDDKDRVVIKSDGAPAYIAGDLAYFLDKRQRGFDLCIYMLGADHHGYIARLKAAAAALGDDPDTVEVMIGQMVNLVRDGQPVRMSKRAGTVITLDDLVEAIGVDAARYSLIRSSVDTPIDIDLALWSSASNENPVYYVQYAHARLSALARNAADLGVVADTARLDLLTHDKEGTLIRNLGEFPRVLESAAALREPHRVCRYLEDLAGDYHRFYDSCRVLPQGDEAPGSLHQARLALCQATRQVIANGLAILGVSAPERM.

The short motif at 130–140 (ANPTGPIHIGG) is the 'HIGH' region element.

The protein belongs to the class-I aminoacyl-tRNA synthetase family. Monomer.

It localises to the cytoplasm. The enzyme catalyses tRNA(Arg) + L-arginine + ATP = L-arginyl-tRNA(Arg) + AMP + diphosphate. In Mycobacterium sp. (strain JLS), this protein is Arginine--tRNA ligase.